The primary structure comprises 525 residues: Lysine--tRNA ligase (525 aa).

Residues 44 to 52 carry the 'HIGH' region motif; the sequence is PSGLPHIGT. The 'KMSKS' region signature appears at 290 to 294; sequence KISKS. Lysine 293 contributes to the ATP binding site.

The protein belongs to the class-I aminoacyl-tRNA synthetase family.

The protein resides in the cytoplasm. It catalyses the reaction tRNA(Lys) + L-lysine + ATP = L-lysyl-tRNA(Lys) + AMP + diphosphate. The protein is Lysine--tRNA ligase of Rickettsia felis (strain ATCC VR-1525 / URRWXCal2) (Rickettsia azadi).